The sequence spans 74 residues: Conotoxin Cal27 (74 aa).

An N-terminal signal peptide occupies residues 1–19 (MSGTGVLLLTLLLLVAMAA).

In terms of processing, may contain 4 disulfide bonds. As to expression, expressed by the venom duct.

The protein resides in the secreted. Functionally, probable neurotoxin. The sequence is that of Conotoxin Cal27 from Californiconus californicus (California cone).